A 344-amino-acid chain; its full sequence is MDDNKRKSLDAALKSLDKTFGKGTILRLGDKEVEKIDSIPTGSVGLDLALGIGGVPKGRIIEIYGPESSGKTTLTLHIIAECQKKGGVCAFIDAEHALDVKYAKDLGVDTENLYISQPDFGEQALEIVETIARSGAIDLIVVDSVAALTPKAEIEGDMGDQHVGLQARLMSQALRELTGIVHKMNTTVIFINQIRMKIGMMGYGTPETTTGGNALKFYSSVRLDVRKTATLKQNDEPIGNRVKVKVAKNKVAPPFKQAEFDVMFGEGVSREGELIDYGVKLDIIDKSGAWFSYKASKLGQGRENAKAFLKENPAIADEITQAIQNSIGIDSMILGAKEDDEGDE.

65–72 serves as a coordination point for ATP; that stretch reads GPESSGKT.

This sequence belongs to the RecA family.

The protein resides in the cytoplasm. Functionally, can catalyze the hydrolysis of ATP in the presence of single-stranded DNA, the ATP-dependent uptake of single-stranded DNA by duplex DNA, and the ATP-dependent hybridization of homologous single-stranded DNAs. It interacts with LexA causing its activation and leading to its autocatalytic cleavage. The sequence is that of Protein RecA from Campylobacter lari.